The following is a 658-amino-acid chain: Phosphomethylpyrimidine synthase (658 aa).

The disordered stretch occupies residues 1-22; sequence MNNSTDAVNPAKKPQTRREKRE. Substrate is bound by residues Asn248, Met277, Tyr306, His342, 362-364, 403-406, and Glu442; these read SRG and DGLR. His446 is a binding site for Zn(2+). Position 469 (Tyr469) interacts with substrate. Residue His510 participates in Zn(2+) binding. Positions 590, 593, and 598 each coordinate [4Fe-4S] cluster.

This sequence belongs to the ThiC family. Homodimer. [4Fe-4S] cluster is required as a cofactor.

It carries out the reaction 5-amino-1-(5-phospho-beta-D-ribosyl)imidazole + S-adenosyl-L-methionine = 4-amino-2-methyl-5-(phosphooxymethyl)pyrimidine + CO + 5'-deoxyadenosine + formate + L-methionine + 3 H(+). It participates in cofactor biosynthesis; thiamine diphosphate biosynthesis. Its function is as follows. Catalyzes the synthesis of the hydroxymethylpyrimidine phosphate (HMP-P) moiety of thiamine from aminoimidazole ribotide (AIR) in a radical S-adenosyl-L-methionine (SAM)-dependent reaction. In Colwellia psychrerythraea (strain 34H / ATCC BAA-681) (Vibrio psychroerythus), this protein is Phosphomethylpyrimidine synthase.